Here is a 156-residue protein sequence, read N- to C-terminus: Small ribosomal subunit protein uS7 (156 aa).

It belongs to the universal ribosomal protein uS7 family. As to quaternary structure, part of the 30S ribosomal subunit. Contacts proteins S9 and S11.

Its function is as follows. One of the primary rRNA binding proteins, it binds directly to 16S rRNA where it nucleates assembly of the head domain of the 30S subunit. Is located at the subunit interface close to the decoding center, probably blocks exit of the E-site tRNA. The sequence is that of Small ribosomal subunit protein uS7 from Burkholderia ambifaria (strain MC40-6).